Consider the following 457-residue polypeptide: Multidrug resistance protein MdtK (457 aa).

Transmembrane regions (helical) follow at residues 11 to 31 (LLAL…MGVV), 46 to 66 (AVAV…GLLL), 93 to 113 (WLAL…DHVI), 127 to 147 (AVGF…FQVL), 160 to 180 (GMVI…IFIY), 188 to 208 (LGGV…FLMM), 243 to 263 (LPVA…ALLV), 283 to 301 (LMFM…RVGF), 316 to 336 (YTSM…TIVF), 357 to 377 (LMLL…GSGV), 387 to 407 (IFFI…YLLG), and 418 to 438 (PAGF…LMVL).

Belongs to the multi antimicrobial extrusion (MATE) (TC 2.A.66.1) family. MdtK subfamily.

It is found in the cell inner membrane. Functionally, multidrug efflux pump that functions probably as a Na(+)/drug antiporter. The chain is Multidrug resistance protein MdtK from Yersinia pseudotuberculosis serotype O:1b (strain IP 31758).